We begin with the raw amino-acid sequence, 459 residues long: Protoheme IX farnesyltransferase (459 aa).

The segment at 1–184 (MSRNTATQFV…AYVQLMKPRL (184 aa)) is unknown. The next 12 helical transmembrane spans lie at 9 to 29 (FVAV…LGAT), 66 to 86 (AAAL…RTGA), 93 to 113 (AVTL…YTAM), 123 to 143 (VHLT…AWTL), 184 to 204 (LMWL…SQLG), 211 to 231 (AATV…SGTF), 262 to 282 (LAFG…VNLL), 284 to 304 (AVLG…VLKP), 325 to 345 (WVAV…VIFL), 382 to 402 (HIVY…ELTG), 403 to 423 (LGPL…YFAI), and 438 to 458 (FHAS…DTMV). Residues 185–459 (MWLLCLVAGA…VAVVLDTMVV (275 aa)) are protoheme IX prenyltransferase.

It in the C-terminal section; belongs to the UbiA prenyltransferase family. Protoheme IX farnesyltransferase subfamily.

The protein localises to the cell membrane. The enzyme catalyses heme b + (2E,6E)-farnesyl diphosphate + H2O = Fe(II)-heme o + diphosphate. It participates in porphyrin-containing compound metabolism; heme O biosynthesis; heme O from protoheme: step 1/1. Its function is as follows. Converts heme B (protoheme IX) to heme O by substitution of the vinyl group on carbon 2 of heme B porphyrin ring with a hydroxyethyl farnesyl side group. This chain is Protoheme IX farnesyltransferase (ctaB), found in Halobacterium salinarum (strain ATCC 29341 / DSM 671 / R1).